Here is a 46-residue protein sequence, read N- to C-terminus: KSCCPTTTARNIYNTCRFGGGSRPVCAKLSGCKIISGTKCDSGWNH.

Cystine bridges form between Cys-3-Cys-40, Cys-4-Cys-32, and Cys-16-Cys-26. His-46 is subject to Blocked carboxyl end (His).

This sequence belongs to the plant thionin (TC 1.C.44) family.

Its subcellular location is the secreted. Thionins are small plant proteins which are toxic to animal cells. They seem to exert their toxic effect at the level of the cell membrane. Their precise function is not known. This Phoradendron leucarpum subsp. tomentosum (California mistletoe) protein is Phoratoxin.